The chain runs to 333 residues: Pantothenate synthetase (333 aa).

27-34 (MGALHEGH) contacts ATP. The Proton donor role is filled by His34. Gln61 contacts (R)-pantoate. Gln61 contacts beta-alanine. 148 to 151 (GQKD) is an ATP binding site. Residue Gln154 coordinates (R)-pantoate. ATP contacts are provided by residues Val177 and 185–188 (LSSR).

It belongs to the pantothenate synthetase family. Homodimer.

It localises to the cytoplasm. It catalyses the reaction (R)-pantoate + beta-alanine + ATP = (R)-pantothenate + AMP + diphosphate + H(+). It participates in cofactor biosynthesis; (R)-pantothenate biosynthesis; (R)-pantothenate from (R)-pantoate and beta-alanine: step 1/1. In terms of biological role, catalyzes the condensation of pantoate with beta-alanine in an ATP-dependent reaction via a pantoyl-adenylate intermediate. This Streptomyces avermitilis (strain ATCC 31267 / DSM 46492 / JCM 5070 / NBRC 14893 / NCIMB 12804 / NRRL 8165 / MA-4680) protein is Pantothenate synthetase.